We begin with the raw amino-acid sequence, 369 residues long: NAD(P)H-quinone oxidoreductase subunit 1, chloroplastic (369 aa).

The next 8 helical transmembrane spans lie at 29-49 (IWIIVSILTTIVGVTLGVLVI), 97-117 (IWLFNVGPAIVVIPVFLSYLV), 129-149 (LGIGVFFWIAVSSIAPLGLLM), 167-187 (AAQSISYEIPLALCVLSISLL), 205-225 (LLGWNLWRQPIGFLIFFISSL), 255-275 (FGLFYVGSYLNLLVSSLFVTV), 305-325 (IINAIIGIIITLTKAYLFLFV), and 348-368 (FLLPVALGNLLLTASFQILLL).

It belongs to the complex I subunit 1 family. In terms of assembly, NDH is composed of at least 16 different subunits, 5 of which are encoded in the nucleus.

Its subcellular location is the plastid. It localises to the chloroplast thylakoid membrane. It carries out the reaction a plastoquinone + NADH + (n+1) H(+)(in) = a plastoquinol + NAD(+) + n H(+)(out). The enzyme catalyses a plastoquinone + NADPH + (n+1) H(+)(in) = a plastoquinol + NADP(+) + n H(+)(out). In terms of biological role, NDH shuttles electrons from NAD(P)H:plastoquinone, via FMN and iron-sulfur (Fe-S) centers, to quinones in the photosynthetic chain and possibly in a chloroplast respiratory chain. The immediate electron acceptor for the enzyme in this species is believed to be plastoquinone. Couples the redox reaction to proton translocation, and thus conserves the redox energy in a proton gradient. This chain is NAD(P)H-quinone oxidoreductase subunit 1, chloroplastic, found in Angiopteris evecta (Mule's foot fern).